The chain runs to 209 residues: Large ribosomal subunit protein bL25 (209 aa).

This sequence belongs to the bacterial ribosomal protein bL25 family. CTC subfamily. In terms of assembly, part of the 50S ribosomal subunit; part of the 5S rRNA/L5/L18/L25 subcomplex. Contacts the 5S rRNA. Binds to the 5S rRNA independently of L5 and L18.

Its function is as follows. This is one of the proteins that binds to the 5S RNA in the ribosome where it forms part of the central protuberance. This is Large ribosomal subunit protein bL25 from Chlorobium phaeobacteroides (strain BS1).